The primary structure comprises 456 residues: 26S proteasome non-ATPase regulatory subunit 12 (456 aa).

N-acetylalanine is present on Ala-2. Residue Lys-92 forms a Glycyl lysine isopeptide (Lys-Gly) (interchain with G-Cter in SUMO1); alternate linkage. A Glycyl lysine isopeptide (Lys-Gly) (interchain with G-Cter in SUMO2); alternate cross-link involves residue Lys-92. An N6-acetyllysine mark is found at Lys-221 and Lys-368. The PCI domain maps to 242–420 (SICKHYRAIY…GIINFQRPKD (179 aa)).

The protein belongs to the proteasome subunit p55 family. In terms of assembly, component of the 19S proteasome regulatory particle complex. The 26S proteasome consists of a 20S core particle (CP) and two 19S regulatory subunits (RP). The regulatory particle is made of a lid composed of 9 subunits including PSMD12, a base containing 6 ATPases and few additional components. Interacts with ERCC6.

Functionally, component of the 26S proteasome, a multiprotein complex involved in the ATP-dependent degradation of ubiquitinated proteins. This complex plays a key role in the maintenance of protein homeostasis by removing misfolded or damaged proteins, which could impair cellular functions, and by removing proteins whose functions are no longer required. Therefore, the proteasome participates in numerous cellular processes, including cell cycle progression, apoptosis, or DNA damage repair. The chain is 26S proteasome non-ATPase regulatory subunit 12 (PSMD12) from Bos taurus (Bovine).